The chain runs to 101 residues: Small ribosomal subunit protein uS14 (101 aa).

This sequence belongs to the universal ribosomal protein uS14 family. In terms of assembly, part of the 30S ribosomal subunit. Contacts proteins S3 and S10.

Functionally, binds 16S rRNA, required for the assembly of 30S particles and may also be responsible for determining the conformation of the 16S rRNA at the A site. This is Small ribosomal subunit protein uS14 from Chlamydia trachomatis serovar L2 (strain ATCC VR-902B / DSM 19102 / 434/Bu).